The following is a 362-amino-acid chain: MSLQSIKYTRGSLEILDQLLLPVQSKYLPVRGVEDGWKVINKMQVRGAPAIAIVGCLSLAVEIHPEEFDSKKSLRQELEGKLNYLVSARPTAVNMKMAADELLSLANDLTKDDNVDVAAMKQRFLNATEAMLKKDIADNRAIGAHGAKAILQLVAAAAGAPMAGPVRVLTHCNTGSLATAGYGTALGVVRQLSELGKLEHIYCTETRPYNQGARLTAYELVHEKFPATLVLDSMVAALLRAKNVAAVVVGADRVAANGDTANKIGTYQIAVVAKHHGVPFFVAAPLTSIDLHIPSGDHIIIEERPDREMTHVGEHRIAAPGINCWNPAFDVTPASLITGIITERGVFQPAQLKETITKLLET.

Asp252 serves as the catalytic Proton donor.

Belongs to the eIF-2B alpha/beta/delta subunits family. MtnA subfamily.

It localises to the cytoplasm. The protein resides in the nucleus. It catalyses the reaction 5-(methylsulfanyl)-alpha-D-ribose 1-phosphate = 5-(methylsulfanyl)-D-ribulose 1-phosphate. It participates in amino-acid biosynthesis; L-methionine biosynthesis via salvage pathway; L-methionine from S-methyl-5-thio-alpha-D-ribose 1-phosphate: step 1/6. In terms of biological role, catalyzes the interconversion of methylthioribose-1-phosphate (MTR-1-P) into methylthioribulose-1-phosphate (MTRu-1-P). This chain is Methylthioribose-1-phosphate isomerase, found in Drosophila persimilis (Fruit fly).